We begin with the raw amino-acid sequence, 456 residues long: tRNA modification GTPase MnmE (456 aa).

(6S)-5-formyl-5,6,7,8-tetrahydrofolate contacts are provided by R21, E85, and K124. The TrmE-type G domain maps to Q220–A379. N230 contacts K(+). GTP contacts are provided by residues N230–S235, S249–T255, and D274–G277. S234 provides a ligand contact to Mg(2+). 3 residues coordinate K(+): S249, I251, and T254. T255 provides a ligand contact to Mg(2+). K456 contributes to the (6S)-5-formyl-5,6,7,8-tetrahydrofolate binding site.

The protein belongs to the TRAFAC class TrmE-Era-EngA-EngB-Septin-like GTPase superfamily. TrmE GTPase family. As to quaternary structure, homodimer. Heterotetramer of two MnmE and two MnmG subunits. K(+) is required as a cofactor.

The protein localises to the cytoplasm. Functionally, exhibits a very high intrinsic GTPase hydrolysis rate. Involved in the addition of a carboxymethylaminomethyl (cmnm) group at the wobble position (U34) of certain tRNAs, forming tRNA-cmnm(5)s(2)U34. The sequence is that of tRNA modification GTPase MnmE from Leptospira borgpetersenii serovar Hardjo-bovis (strain JB197).